We begin with the raw amino-acid sequence, 324 residues long: tRNA dimethylallyltransferase (324 aa).

17 to 24 (GPTASGKT) provides a ligand contact to ATP. Residue 19-24 (TASGKT) participates in substrate binding. Interaction with substrate tRNA stretches follow at residues 42-45 (DSAL), 166-170 (QRIQR), and 251-256 (RCVGYR).

It belongs to the IPP transferase family. In terms of assembly, monomer. The cofactor is Mg(2+).

The catalysed reaction is adenosine(37) in tRNA + dimethylallyl diphosphate = N(6)-dimethylallyladenosine(37) in tRNA + diphosphate. Functionally, catalyzes the transfer of a dimethylallyl group onto the adenine at position 37 in tRNAs that read codons beginning with uridine, leading to the formation of N6-(dimethylallyl)adenosine (i(6)A). The polypeptide is tRNA dimethylallyltransferase (Burkholderia pseudomallei (strain 668)).